The following is a 419-amino-acid chain: Protein-lysine N-methyltransferase EFM2 (419 aa).

S-adenosyl-L-methionine is bound by residues Trp-222, 261-263 (GAG), Asp-290, Trp-318, and Ala-340.

Belongs to the class I-like SAM-binding methyltransferase superfamily. METTL21 family.

Its subcellular location is the cytoplasm. S-adenosyl-L-methionine-dependent protein-lysine N-methyltransferase that mono- and dimethylates elongation factor 2 (EFT1/EFT2) at 'Lys-613' and methylates elongation factor 3A (YEF3). This is Protein-lysine N-methyltransferase EFM2 from Saccharomyces cerevisiae (strain ATCC 204508 / S288c) (Baker's yeast).